We begin with the raw amino-acid sequence, 556 residues long: Arginine--tRNA ligase (556 aa).

Residues 132–142 (ANPTGDLHLGH) carry the 'HIGH' region motif.

This sequence belongs to the class-I aminoacyl-tRNA synthetase family. As to quaternary structure, monomer.

It is found in the cytoplasm. It catalyses the reaction tRNA(Arg) + L-arginine + ATP = L-arginyl-tRNA(Arg) + AMP + diphosphate. This is Arginine--tRNA ligase from Listeria monocytogenes serotype 4b (strain F2365).